The following is a 1360-amino-acid chain: Activating molecule in BECN1-regulated autophagy protein 1B (1360 aa).

WD repeat units lie at residues 50–89, 92–132, and 134–174; these read DNPR…CLHS, GHRR…ESWF, and ESNV…AVVK. The span at 249-258 shows a compositional bias: polar residues; sequence RSSGAQANDQ. 7 disordered regions span residues 249–277, 315–364, 412–490, 514–573, 587–616, 664–688, and 754–796; these read RSSG…FQYP, PTGL…NSAH, GVET…QRNN, ELER…RCRS, WERS…EDPG, PTVS…NPDE, and TLSN…MPRN. Over residues 319-333 the composition is skewed to low complexity; sequence QPSDSTQPQTQSGPS. The segment covering 350–361 has biased composition (polar residues); that stretch reads AFSSVFSGTAGN. The span at 428–437 shows a compositional bias: low complexity; it reads SSSSMDLLSL. Polar residues-rich tracts occupy residues 443–454 and 473–490; these read GSSSSPIYTSAT and DGTS…QRNN. A compositionally biased stretch (low complexity) spans 590 to 607; that stretch reads SGQTSSSSSSQEGPSWPL. Residues 754 to 768 show a composition bias toward polar residues; it reads TLSNSQADSQSNNPS. Residues 775 to 784 show a composition bias toward acidic residues; the sequence is SDGDYEDIEE. 2 consecutive short sequence motifs (TQT motif) follow at residues 1109–1111 and 1121–1123; these read TQT. Disordered regions lie at residues 1120 to 1142 and 1241 to 1360; these read ETQT…TSRH and SQTS…LYGR. Polar residues-rich tracts occupy residues 1129–1142 and 1241–1252; these read SAST…TSRH and SQTSVRTAQGGN. Over residues 1278–1288 the composition is skewed to low complexity; it reads APGPSGSSGAP. The span at 1311–1321 shows a compositional bias: basic and acidic residues; the sequence is FGDRQPDDVQR. A compositionally biased stretch (low complexity) spans 1329–1347; sequence NMSNHSNNNNNDHSNSYSE. Positions 1348 to 1360 are enriched in basic and acidic residues; sequence SRSRDYPDDLYGR.

This sequence belongs to the WD repeat AMBRA1 family. Component of the DCX(AMBRA1) E3 ubiquitin ligase complex.

It localises to the endoplasmic reticulum. The protein resides in the cytoplasm. Its subcellular location is the cytoskeleton. The protein localises to the cytoplasmic vesicle. It is found in the autophagosome. It localises to the mitochondrion. The protein resides in the cytosol. Its subcellular location is the nucleus. The protein localises to the cell junction. It is found in the focal adhesion. Its pathway is protein modification; protein ubiquitination. Its function is as follows. Substrate-recognition component of a DCX (DDB1-CUL4-X-box) E3 ubiquitin-protein ligase complex involved in cell cycle control and autophagy. The DCX(AMBRA1) complex specifically mediates the polyubiquitination of target proteins. Acts as an upstream master regulator of the transition from G1 to S cell phase: ambra1b specifically recognizes and binds phosphorylated cyclin-D (ccnd1, ccnd2 and ccnd3), leading to cyclin-D ubiquitination by the DCX(AMBRA1) complex and subsequent degradation. Acts as a regulator of Cul5-RING (CRL5) E3 ubiquitin-protein ligase complexes by mediating ubiquitination and degradation of Elongin-C (eloc) component of CRL5 complexes. Acts as a key regulator of autophagy by modulating the BECN1-PIK3C3 complex: controls protein turnover during neuronal development, and regulates normal cell survival and proliferation. In normal conditions, ambra1b is tethered to the cytoskeleton via interaction with dyneins light chains. Upon autophagy induction, ambra1b is released from the cytoskeletal docking site to induce autophagosome nucleation by mediating ubiquitination of proteins involved in autophagy. Also acts as an activator of mitophagy. Required for skeletal muscle development. This chain is Activating molecule in BECN1-regulated autophagy protein 1B, found in Danio rerio (Zebrafish).